The primary structure comprises 268 residues: Tryptophan synthase alpha chain (268 aa).

Catalysis depends on proton acceptor residues E49 and D60.

The protein belongs to the TrpA family. As to quaternary structure, tetramer of two alpha and two beta chains.

The enzyme catalyses (1S,2R)-1-C-(indol-3-yl)glycerol 3-phosphate + L-serine = D-glyceraldehyde 3-phosphate + L-tryptophan + H2O. Its pathway is amino-acid biosynthesis; L-tryptophan biosynthesis; L-tryptophan from chorismate: step 5/5. Its function is as follows. The alpha subunit is responsible for the aldol cleavage of indoleglycerol phosphate to indole and glyceraldehyde 3-phosphate. The protein is Tryptophan synthase alpha chain of Erwinia tasmaniensis (strain DSM 17950 / CFBP 7177 / CIP 109463 / NCPPB 4357 / Et1/99).